A 374-amino-acid chain; its full sequence is Anhydro-N-acetylmuramic acid kinase (374 aa).

12–19 (GTSLDGID) is a binding site for ATP.

The protein belongs to the anhydro-N-acetylmuramic acid kinase family.

It carries out the reaction 1,6-anhydro-N-acetyl-beta-muramate + ATP + H2O = N-acetyl-D-muramate 6-phosphate + ADP + H(+). Its pathway is amino-sugar metabolism; 1,6-anhydro-N-acetylmuramate degradation. It participates in cell wall biogenesis; peptidoglycan recycling. Functionally, catalyzes the specific phosphorylation of 1,6-anhydro-N-acetylmuramic acid (anhMurNAc) with the simultaneous cleavage of the 1,6-anhydro ring, generating MurNAc-6-P. Is required for the utilization of anhMurNAc either imported from the medium or derived from its own cell wall murein, and thus plays a role in cell wall recycling. The sequence is that of Anhydro-N-acetylmuramic acid kinase from Sodalis glossinidius (strain morsitans).